Reading from the N-terminus, the 430-residue chain is 2-deoxy-scyllo-inosose synthase (430 aa).

Residues aspartate 42, 73-76 (EVHK), 105-109 (GVTGN), 129-130 (TT), 140-142 (SLK), and 151-152 (KN) each bind NAD(+). Lysine 142 is a catalytic residue. A Co(2+)-binding site is contributed by glutamate 184. Residue glutamate 244 is part of the active site. Co(2+) contacts are provided by histidine 247 and histidine 263. Positions 371 to 430 (RGGAGGGAAEPAAARTGPVPDGPEAAVPATPGPVPAGPAAAAPLPSGPAPTAPAAAGPVP) are disordered. Residues 379–399 (AEPAAARTGPVPDGPEAAVPA) are compositionally biased toward low complexity.

It belongs to the sugar phosphate cyclases superfamily. DOI synthase family. NAD(+) is required as a cofactor. Requires Co(2+) as cofactor.

It carries out the reaction D-glucose 6-phosphate = 2-deoxy-L-scyllo-inosose + phosphate. Its pathway is metabolic intermediate biosynthesis; 2-deoxystreptamine biosynthesis; 2-deoxystreptamine from D-glucose 6-phosphate: step 1/4. It participates in antibiotic biosynthesis; neomycin biosynthesis. Functionally, catalyzes the intramolecular carbocycle formation from D-glucose-6-phosphate to 2-deoxy-scyllo-inosose (DOI). This Streptomyces fradiae (Streptomyces roseoflavus) protein is 2-deoxy-scyllo-inosose synthase (neoC).